The sequence spans 193 residues: E3 ubiquitin-protein ligase RMA2 (193 aa).

Residues 21–75 (CNICLDQVRDPVVTLCGHLFCWPCIHKWTYASNNSRQRVDQYDHKREPPKCPVCK) form an RING-type zinc finger. The helical; Anchor for type IV membrane protein transmembrane segment at 175–192 (LSRVYLFLLCFMFMCLFL) threads the bilayer.

Interacts with ERABP1. As to expression, barely detected in roots and limited to the root tips. Expressed in leaf hydathodes and in siliques.

The protein resides in the endoplasmic reticulum membrane. It carries out the reaction S-ubiquitinyl-[E2 ubiquitin-conjugating enzyme]-L-cysteine + [acceptor protein]-L-lysine = [E2 ubiquitin-conjugating enzyme]-L-cysteine + N(6)-ubiquitinyl-[acceptor protein]-L-lysine.. It functions in the pathway protein modification; protein ubiquitination. In terms of biological role, E3 ubiquitin-protein ligase that promotes the ubiquitination and proteasomal degradation of the auxin-binding protein ERABP1. The chain is E3 ubiquitin-protein ligase RMA2 (RMA2) from Arabidopsis thaliana (Mouse-ear cress).